Here is a 507-residue protein sequence, read N- to C-terminus: GMP synthase [glutamine-hydrolyzing] (507 aa).

Positions 3–190 (KILVIDYGSQ…IQGICGLKGS (188 aa)) constitute a Glutamine amidotransferase type-1 domain. The active-site Nucleophile is the Cys-77. Active-site residues include His-164 and Glu-166. The 192-residue stretch at 191 to 382 (WTLMDFVENK…LGLPREILYR (192 aa)) folds into the GMPS ATP-PPase domain. 218–224 (SGGVDSS) lines the ATP pocket.

In terms of assembly, homodimer.

The enzyme catalyses XMP + L-glutamine + ATP + H2O = GMP + L-glutamate + AMP + diphosphate + 2 H(+). The protein operates within purine metabolism; GMP biosynthesis; GMP from XMP (L-Gln route): step 1/1. Functionally, catalyzes the synthesis of GMP from XMP. This chain is GMP synthase [glutamine-hydrolyzing], found in Petrotoga mobilis (strain DSM 10674 / SJ95).